The following is an 88-amino-acid chain: UPF0147 protein Ta0600 (88 aa).

It belongs to the UPF0147 family.

This chain is UPF0147 protein Ta0600, found in Thermoplasma acidophilum (strain ATCC 25905 / DSM 1728 / JCM 9062 / NBRC 15155 / AMRC-C165).